Reading from the N-terminus, the 114-residue chain is SOSS complex subunit C homolog (114 aa).

Residues Met-1–Glu-10 show a composition bias toward polar residues. Residues Met-1 to His-61 are disordered.

Belongs to the SOSS-C family.

The sequence is that of SOSS complex subunit C homolog from Nematostella vectensis (Starlet sea anemone).